The chain runs to 243 residues: uncharacterized protein (243 aa).

The segment covering 1–18 (MSNSHYNNYQQQQPHSSN) has biased composition (low complexity). Residues 1–30 (MSNSHYNNYQQQQPHSSNGDPEYQHQQMVH) are disordered. The 195-residue stretch at 38–232 (GHGMKTVAVP…MHYKEYREYQ (195 aa)) folds into the AMMECR1 domain.

This is an uncharacterized protein from Drosophila melanogaster (Fruit fly).